The sequence spans 247 residues: Transmembrane protein 33 (247 aa).

Ala2 bears the N-acetylalanine mark. The Lumenal portion of the chain corresponds to 2 to 31; the sequence is ADTTPNGPQGAGAVQFMMTNKLDTAMWLSR. A helical membrane pass occupies residues 32–52; sequence LFTVYCSALFVLPLLGLHEAA. Over 53-100 the chain is Cytoplasmic; sequence SFYQRALLANALTSALRLHQRLPHFQLSRAFLAQALLEDSCHYLLYSL. Residues 101-121 traverse the membrane as a helical segment; it reads IFVNSYPVTMSIFPVLLFSLL. The Lumenal portion of the chain corresponds to 122–155; it reads HAATYTKKVLDAKGSNSLPLLRSVLDKLSTNQQN. Residues 156–176 traverse the membrane as a helical segment; that stretch reads ILKFIACNEIFLMPATVFMLF. At 177 to 247 the chain is on the cytoplasmic side; the sequence is SGQGSLLQPF…FISRLAPTVA (71 aa).

Belongs to the PER33/POM33 family. As to quaternary structure, interacts with EIF2AK3. Interacts with ARL6IP1, isoform RTN1-A of RTN1, isoform RTN2-B of RTN2, isoform 3 of RTN3 and isoform 3 of RTN4. Interacts with RNF5. Interacts with RNF26. Interacts with PKD2. Highly expressed in the liver and significantly in brain, lungs and kidneys.

The protein localises to the endoplasmic reticulum membrane. The protein resides in the melanosome. It localises to the nucleus envelope. Acts as a regulator of the tubular endoplasmic reticulum (ER) network by modulating intracellular calcium homeostasis. Mechanistically, stimulates PKD2 calcium-dependent activity. Suppresses the RTN3/4-induced formation of the ER tubules. Positively regulates PERK-mediated and IRE1-mediated unfolded protein response signaling. Plays an essential role in VEGF-mediated release of Ca(2+) from ER stores during angiogenesis. Also plays a role in the modulation of innate immune signaling through the cGAS-STING pathway by interacting with RNF26. Participates in lipid metabolism by acting as a downstream effector of the pyruvate kinase/PKM. Forms a complex with RNF5 to facilitate polyubiquitination and subsequent degradation of SCAP on the ER membrane. This is Transmembrane protein 33 (Tmem33) from Rattus norvegicus (Rat).